The chain runs to 132 residues: Auxin-responsive protein SAUR72 (132 aa).

The segment at 22–54 (SDSQRPSRRSESFLRSSVTRRSKKQTSSVPEGH) is disordered. A compositionally biased stretch (basic and acidic residues) spans 23–33 (DSQRPSRRSES).

Belongs to the ARG7 family. As to quaternary structure, interacts with and inhibits PP2C-D subfamily of type 2C phosphatases such as PP2C67/PP2C-D1. In terms of tissue distribution, highly expressed in the steles of roots and hypocotyls.

The protein resides in the cytoplasm. Its function is as follows. Provide a mechanistic link between auxin and plasma membrane H(+)-ATPases (PM H(+)-ATPases, e.g. AHA1 and AHA2), and triggers PM H(+)-ATPases activity by promoting phosphorylation of their C-terminal autoinhibitory domain as a result of PP2C-D subfamily of type 2C phosphatases inhibition, thus leading to the acidification of the apoplast and the facilitation of solutes and water uptake to drive cell expansion. Plays a role in the regulation of cell expansion, root meristem patterning and auxin transport. This Arabidopsis thaliana (Mouse-ear cress) protein is Auxin-responsive protein SAUR72.